The primary structure comprises 66 residues: Large ribosomal subunit protein uL29 (66 aa).

It belongs to the universal ribosomal protein uL29 family.

The protein is Large ribosomal subunit protein uL29 of Borrelia duttonii (strain Ly).